Reading from the N-terminus, the 152-residue chain is uncharacterized protein (152 aa).

The next 3 membrane-spanning stretches (helical) occupy residues 13-33 (LLWF…LLFF), 38-58 (LIVE…SLFM), and 69-89 (WVIF…FFVI).

Its subcellular location is the cell membrane. This is an uncharacterized protein from Mycoplasma pneumoniae (strain ATCC 29342 / M129 / Subtype 1) (Mycoplasmoides pneumoniae).